The sequence spans 374 residues: uncharacterized protein (374 aa).

Positions 1 to 46 (MVNEEEKDLTAEGDSNNTGVSPDSIKNKTLDFYPKEKTTERKTRSR) are disordered. The span at 25-46 (IKNKTLDFYPKEKTTERKTRSR) shows a compositional bias: basic and acidic residues. Transmembrane regions (helical) follow at residues 70 to 90 (YAYI…FIAA), 127 to 147 (WVFY…KIGI), 153 to 173 (TIVY…IPVI), 199 to 219 (IWLF…YGLV), 242 to 262 (ISIA…MLAI), and 312 to 332 (YFFG…AITI).

To M.genitalium MG432 and MG443.

The protein localises to the cell membrane. This is an uncharacterized protein from Spiroplasma citri.